Here is a 220-residue protein sequence, read N- to C-terminus: Ribosomal RNA small subunit methyltransferase G (220 aa).

S-adenosyl-L-methionine-binding positions include glycine 78, phenylalanine 83, 129–130, and arginine 146; that span reads GE.

This sequence belongs to the methyltransferase superfamily. RNA methyltransferase RsmG family.

It localises to the cytoplasm. The catalysed reaction is guanosine(527) in 16S rRNA + S-adenosyl-L-methionine = N(7)-methylguanosine(527) in 16S rRNA + S-adenosyl-L-homocysteine. Its function is as follows. Specifically methylates the N7 position of guanine in position 527 of 16S rRNA. The chain is Ribosomal RNA small subunit methyltransferase G from Geobacter metallireducens (strain ATCC 53774 / DSM 7210 / GS-15).